Consider the following 167-residue polypeptide: Phosphopantetheine adenylyltransferase (167 aa).

Thr-9 is a binding site for substrate. ATP contacts are provided by residues 9–10 and His-17; that span reads TF. 3 residues coordinate substrate: Lys-41, Leu-73, and Arg-87. ATP is bound by residues 88–90, Glu-98, and 123–129; these read GLR and YQFISGT.

Belongs to the bacterial CoaD family. As to quaternary structure, homohexamer. Mg(2+) is required as a cofactor.

Its subcellular location is the cytoplasm. The enzyme catalyses (R)-4'-phosphopantetheine + ATP + H(+) = 3'-dephospho-CoA + diphosphate. Its pathway is cofactor biosynthesis; coenzyme A biosynthesis; CoA from (R)-pantothenate: step 4/5. Reversibly transfers an adenylyl group from ATP to 4'-phosphopantetheine, yielding dephospho-CoA (dPCoA) and pyrophosphate. The chain is Phosphopantetheine adenylyltransferase from Bordetella avium (strain 197N).